A 105-amino-acid chain; its full sequence is MIASKFGIGQQVRHSLLGYLGVVVDIDPVYSLAEPSPDELAVNDELRAAPWYHVVMEDDNGLPIHTYLAEAQLSSEMREEHPEQPSMDELARTIRKQLQAPRLRN.

The protein belongs to the HspQ family.

It is found in the cytoplasm. Its function is as follows. Involved in the degradation of certain denaturated proteins, including DnaA, during heat shock stress. The polypeptide is Heat shock protein HspQ (Escherichia fergusonii (strain ATCC 35469 / DSM 13698 / CCUG 18766 / IAM 14443 / JCM 21226 / LMG 7866 / NBRC 102419 / NCTC 12128 / CDC 0568-73)).